Here is a 106-residue protein sequence, read N- to C-terminus: UPF0145 protein Nmul_A0734 (106 aa).

The protein belongs to the UPF0145 family.

The chain is UPF0145 protein Nmul_A0734 from Nitrosospira multiformis (strain ATCC 25196 / NCIMB 11849 / C 71).